We begin with the raw amino-acid sequence, 354 residues long: uncharacterized protein (354 aa).

9 consecutive transmembrane segments (helical) span residues 9–29 (MGKIELHHVFVMLSCIYLIFS), 31–51 (ISINSAVVFLFSSIFFYISFT), 76–96 (NFGIFLMIVGLIAVTSDLIWV), 109–129 (FLNVYFTTLSHLFLVGWAIVV), 144–164 (IIFSILIMLLGYRTNVLVLLI), 185–205 (GILVFVILLGLSILRLYALGV), 278–298 (YGTLAIIPYFGILGIFLGFFY), 306–326 (GIYLGIYGILFAYTLIGIESG), and 327–347 (ILDIDVILYYFFGLILCIYAI).

The protein resides in the cell membrane. This is an uncharacterized protein from Methanocaldococcus jannaschii (strain ATCC 43067 / DSM 2661 / JAL-1 / JCM 10045 / NBRC 100440) (Methanococcus jannaschii).